The following is a 1042-amino-acid chain: Aldehyde reductase lnaA (1042 aa).

The interval His-29 to Arg-425 is adenylation (A) domain. In terms of domain architecture, Carrier spans Asp-532 to Ile-609. O-(pantetheine 4'-phosphoryl)serine is present on Ser-569. The short-chain dehydrogenase/reductase (R) domain stretch occupies residues Leu-655–Val-897.

The protein belongs to the NRP synthetase family.

The enzyme catalyses L-tyrosinal + AMP + diphosphate + NADP(+) = L-tyrosine + ATP + NADPH + H(+). It participates in secondary metabolite biosynthesis. Non-canonical nonribosomal peptide synthetase; part of the lna gene cluster that mediates the biosynthesis of diastereomeric piperazines. Lna and lnb clusters encode sets of enzymes that produce overlapping sets of previously undescribed metabolites such as piperazinomycin-like metabolites or morpholine. The lna and lnb biosynthetic pathways appear to be part of a signaling network that controls the formation of sclerotia, a resilient overwintering structure. One primary function of the non-canonical nonribosomal peptide synthetases lnaA and lnbA consists in the reduction of L-tyrosine. The presence in the clusters of tailoring enzymes such as the oxidoreductases lnaB, lnbB, lnaE or lnbE, as well as of the cytochrome P450 monooxygenases lnaC, lnaD, or lnbC, might explain formation of various diastereomeric piperazines. The protein is Aldehyde reductase lnaA of Aspergillus flavus (strain ATCC 200026 / FGSC A1120 / IAM 13836 / NRRL 3357 / JCM 12722 / SRRC 167).